The following is a 317-amino-acid chain: Polysulfide reductase chain C (317 aa).

Helical transmembrane passes span 20 to 40, 54 to 75, 98 to 118, 147 to 167, 182 to 202, 221 to 237, 259 to 279, and 289 to 309; these read IAVYLFLAGLSAGAIISAIII, IIKAGALIAPLTIGAGLLLLIF, LGVLALFAYFPVVLIFLLGVF, IVTFVLAIGVGAYTGFLLSAM, FLASGISAGISGNLLIGLLFF, VILFEAFLLFILFVGMY, LFWLGVAGMGLALPVVLNVAL, and FVMLNALIVLAGVMALRFYIL.

Belongs to the NrfD family. Functional polysulfide reductase is made up of three different (A, B, and C) subunits.

It is found in the cell inner membrane. Its function is as follows. Could possibly serve as the membrane anchor of the enzyme. Functionally, component of the phosphorylative electron transport system with polysulfide as the terminal acceptor. This Wolinella succinogenes (strain ATCC 29543 / DSM 1740 / CCUG 13145 / JCM 31913 / LMG 7466 / NCTC 11488 / FDC 602W) (Vibrio succinogenes) protein is Polysulfide reductase chain C (psrC).